The following is a 551-amino-acid chain: Crossover junction endonuclease EME1B (551 aa).

2 disordered regions span residues 1–55 and 187–239; these read MNDH…PIFV and TTLP…RLEK. Residues 37–51 are compositionally biased toward polar residues; that stretch reads SDPTPQKQPPESSFT. The span at 202–239 shows a compositional bias: basic and acidic residues; the sequence is SKEDKTSAMEEKKLRKEQERLEKAASKAEEAERKRLEK. The stretch at 203 to 253 forms a coiled coil; that stretch reads KEDKTSAMEEKKLRKEQERLEKAASKAEEAERKRLEKEKKKWEKGKLALKS. Residues 287 to 484 form the ERCC4 domain; that stretch reads NPIERSIVWT…PSMKSLLKVY (198 aa).

The protein belongs to the EME1/MMS4 family. As to quaternary structure, forms a heterodimer with MUS81. Mg(2+) serves as cofactor. It depends on Ca(2+) as a cofactor.

Its subcellular location is the nucleus. Interacts with MUS81 to form a DNA structure-specific endonuclease with substrate preference for branched DNA structures with a 5'-end at the branch nick. Typical substrates include 3'-flap structures, D-loops, replication forks, nicked Holliday junctions and also intact Holliday junctions with a reduced efficiency. May be required in mitosis for the processing of stalled or collapsed replication fork intermediates. Plays a role in DNA repair and in genotoxic stress-induced homologous recombination (HR) in somatic cells. Mediates a subset of meiotic recombination events that are insensitive to crossover interference. This chain is Crossover junction endonuclease EME1B (EME1B), found in Arabidopsis thaliana (Mouse-ear cress).